A 228-amino-acid chain; its full sequence is UPF0173 metal-dependent hydrolase BcerKBAB4_4442 (228 aa).

The protein belongs to the UPF0173 family.

This is UPF0173 metal-dependent hydrolase BcerKBAB4_4442 from Bacillus mycoides (strain KBAB4) (Bacillus weihenstephanensis).